The primary structure comprises 227 residues: Ribose-5-phosphate isomerase A (227 aa).

Residues 26 to 29 (TGST), 82 to 85 (DGAD), and 95 to 98 (KGGG) contribute to the substrate site. Glu104 acts as the Proton acceptor in catalysis. Substrate is bound at residue Lys122.

Belongs to the ribose 5-phosphate isomerase family. Homodimer.

The catalysed reaction is aldehydo-D-ribose 5-phosphate = D-ribulose 5-phosphate. It participates in carbohydrate degradation; pentose phosphate pathway; D-ribose 5-phosphate from D-ribulose 5-phosphate (non-oxidative stage): step 1/1. Functionally, catalyzes the reversible conversion of ribose-5-phosphate to ribulose 5-phosphate. In Streptococcus pyogenes serotype M5 (strain Manfredo), this protein is Ribose-5-phosphate isomerase A.